The primary structure comprises 110 residues: Large ribosomal subunit protein eL34 (110 aa).

Residues Met1 to His41 form a disordered region. Residues Val30–His41 are compositionally biased toward basic residues.

Belongs to the eukaryotic ribosomal protein eL34 family.

This Encephalitozoon cuniculi (strain GB-M1) (Microsporidian parasite) protein is Large ribosomal subunit protein eL34 (RPL34).